Here is a 347-residue protein sequence, read N- to C-terminus: Probable replication factor C subunit 3 (347 aa).

The protein belongs to the activator 1 small subunits family. In terms of assembly, heteropentamer of various rfc subunits that forms a complex (RFC) with PCNA in the presence of ATP.

It is found in the nucleus. Its function is as follows. The elongation of primed DNA templates by DNA polymerase delta and epsilon requires the action of the accessory proteins PCNA and activator 1. In Dictyostelium discoideum (Social amoeba), this protein is Probable replication factor C subunit 3 (rfc3).